The following is a 199-amino-acid chain: Shikimate kinase (199 aa).

14-19 is a binding site for ATP; that stretch reads GSGKST. A Mg(2+)-binding site is contributed by Ser18. Residues Asp36, Arg60, and Gly82 each coordinate substrate. Arg120 lines the ATP pocket. Arg147 lines the substrate pocket.

It belongs to the shikimate kinase family. In terms of assembly, monomer. Requires Mg(2+) as cofactor.

It localises to the cytoplasm. It catalyses the reaction shikimate + ATP = 3-phosphoshikimate + ADP + H(+). It participates in metabolic intermediate biosynthesis; chorismate biosynthesis; chorismate from D-erythrose 4-phosphate and phosphoenolpyruvate: step 5/7. Catalyzes the specific phosphorylation of the 3-hydroxyl group of shikimic acid using ATP as a cosubstrate. In Chlorobium limicola (strain DSM 245 / NBRC 103803 / 6330), this protein is Shikimate kinase.